The chain runs to 392 residues: MKATGIVVEYNPFHNGHQLHLNKARELTKADVVIAVMSGSFVQRGEPAILPKWERTKMALAAGVDMVVELPVSFATQHATIFAEESVRILDALHVDALFFGSEHGVSEDFLTAAKTVVEHEASFNQAIQLALIDKKTSYARAYTETFKQSFGTELLDVTKPNNILGFHYALAIQKQNPTISLQTMARIHAGYHDIEANHDQIASATAIRKLLLAGNLEEASRYLPASSIEILKNYDGPFLSWENYWALLKYRLIQAETDELEGIRNVSEGIQNRMQIAATKAQYFSDFIESMKTKRYSNARIQRTALQILLNARNIPSAPYIRILGMNKTGQKYLSHHKKNISLPIVTTVSKAAPGLLEEDLRATNIYTLVKGLENYQAGDFHIPPILKSQT.

ATP contacts are provided by residues 7–20, Gly-101, Asn-162, and 187–188; these read VVEY…HQLH and RI.

It belongs to the TmcAL family.

It is found in the cytoplasm. It catalyses the reaction cytidine(34) in elongator tRNA(Met) + acetate + ATP = N(4)-acetylcytidine(34) in elongator tRNA(Met) + AMP + diphosphate. Its function is as follows. Catalyzes the formation of N(4)-acetylcytidine (ac(4)C) at the wobble position of elongator tRNA(Met), using acetate and ATP as substrates. First activates an acetate ion to form acetyladenylate (Ac-AMP) and then transfers the acetyl group to tRNA to form ac(4)C34. This chain is tRNA(Met) cytidine acetate ligase, found in Listeria welshimeri serovar 6b (strain ATCC 35897 / DSM 20650 / CCUG 15529 / CIP 8149 / NCTC 11857 / SLCC 5334 / V8).